The following is a 179-amino-acid chain: MKYIEVDEELYRLIASKTERIGESASEILRRLLGLEVEASATQEKDEPEVISQPGLEETADVEDKPRFIDLHSSINKEELAAAKGAVGRFLFILEAVYLASPEQFAQVLKIKGRDRLYFATSKQSLLKASKSANPKEIGQSGYWVTTNNNTAKKRTILTEVLHQYGTVEAQIESITRNI.

Residues 86–87 (AV) are interaction with DNA.

This sequence belongs to the SeqA family. In terms of assembly, homodimer. Polymerizes to form helical filaments.

It localises to the cytoplasm. Negative regulator of replication initiation, which contributes to regulation of DNA replication and ensures that replication initiation occurs exactly once per chromosome per cell cycle. Binds to pairs of hemimethylated GATC sequences in the oriC region, thus preventing assembly of replication proteins and re-initiation at newly replicated origins. Repression is relieved when the region becomes fully methylated. The chain is Negative modulator of initiation of replication from Shewanella woodyi (strain ATCC 51908 / MS32).